The sequence spans 178 residues: Sec-independent protein translocase protein TatB (178 aa).

Residues 1 to 21 (MFDIGWSELLVIGVVALIAIG) form a helical membrane-spanning segment. Residues 146–178 (LAIVREIKPEPQPQPADGAAPAEPERLKDAKAS) are disordered. Residues 168-178 (EPERLKDAKAS) show a composition bias toward basic and acidic residues.

It belongs to the TatB family. In terms of assembly, the Tat system comprises two distinct complexes: a TatABC complex, containing multiple copies of TatA, TatB and TatC subunits, and a separate TatA complex, containing only TatA subunits. Substrates initially bind to the TatABC complex, which probably triggers association of the separate TatA complex to form the active translocon.

The protein resides in the cell inner membrane. Its function is as follows. Part of the twin-arginine translocation (Tat) system that transports large folded proteins containing a characteristic twin-arginine motif in their signal peptide across membranes. Together with TatC, TatB is part of a receptor directly interacting with Tat signal peptides. TatB may form an oligomeric binding site that transiently accommodates folded Tat precursor proteins before their translocation. This is Sec-independent protein translocase protein TatB from Bradyrhizobium sp. (strain ORS 278).